The primary structure comprises 672 residues: uncharacterized protein (672 aa).

The first 24 residues, Met-1–Ala-24, serve as a signal peptide directing secretion. 6 helical membrane-spanning segments follow: residues Ile-226–Lys-246, Ile-254–Leu-274, Ile-410–Ile-430, Cys-436–Phe-456, Val-469–Thr-489, and Val-562–Phe-582. Residues Ala-626–Lys-672 form a disordered region. Over residues Val-633–Glu-647 the composition is skewed to basic and acidic residues. The segment covering Gly-656–Lys-672 has biased composition (gly residues).

The protein belongs to the TrbL/VirB6 family.

The protein resides in the cell membrane. This is an uncharacterized protein from Rickettsia felis (strain ATCC VR-1525 / URRWXCal2) (Rickettsia azadi).